The chain runs to 131 residues: Large ribosomal subunit protein bL17 (131 aa).

It belongs to the bacterial ribosomal protein bL17 family. In terms of assembly, part of the 50S ribosomal subunit. Contacts protein L32.

The sequence is that of Large ribosomal subunit protein bL17 from Burkholderia ambifaria (strain MC40-6).